We begin with the raw amino-acid sequence, 935 residues long: LPS-assembly protein LptD (935 aa).

A signal peptide spans 1 to 33 (MALKSPAFRRKFPLLVTGGLLALQPLATSYVVA). Positions 52-85 (KTPVNNLPPRPVHEGAAVSSGTEAAGEAETADRP) are disordered. Low complexity predominate over residues 65 to 79 (EGAAVSSGTEAAGEA).

Belongs to the LptD family. As to quaternary structure, component of the lipopolysaccharide transport and assembly complex. Interacts with LptE and LptA.

The protein localises to the cell outer membrane. Functionally, together with LptE, is involved in the assembly of lipopolysaccharide (LPS) at the surface of the outer membrane. The sequence is that of LPS-assembly protein LptD from Pseudomonas putida (strain ATCC 700007 / DSM 6899 / JCM 31910 / BCRC 17059 / LMG 24140 / F1).